The chain runs to 527 residues: Bifunctional purine biosynthesis protein PurH (527 aa).

The MGS-like domain occupies 9–156 (NAKRPIRRAL…KNHPSVAVVV (148 aa)).

The protein belongs to the PurH family.

It carries out the reaction (6R)-10-formyltetrahydrofolate + 5-amino-1-(5-phospho-beta-D-ribosyl)imidazole-4-carboxamide = 5-formamido-1-(5-phospho-D-ribosyl)imidazole-4-carboxamide + (6S)-5,6,7,8-tetrahydrofolate. The enzyme catalyses IMP + H2O = 5-formamido-1-(5-phospho-D-ribosyl)imidazole-4-carboxamide. It functions in the pathway purine metabolism; IMP biosynthesis via de novo pathway; 5-formamido-1-(5-phospho-D-ribosyl)imidazole-4-carboxamide from 5-amino-1-(5-phospho-D-ribosyl)imidazole-4-carboxamide (10-formyl THF route): step 1/1. The protein operates within purine metabolism; IMP biosynthesis via de novo pathway; IMP from 5-formamido-1-(5-phospho-D-ribosyl)imidazole-4-carboxamide: step 1/1. The sequence is that of Bifunctional purine biosynthesis protein PurH from Mycolicibacterium paratuberculosis (strain ATCC BAA-968 / K-10) (Mycobacterium paratuberculosis).